A 2427-amino-acid polypeptide reads, in one-letter code: Interferon-induced very large GTPase 1 (2427 aa).

Positions 1485–1726 (DKRLFVLSVL…KISDFKFRVQ (242 aa)) constitute a VLIG-type G domain. GTP is bound by residues 1495-1502 (GLQSSGKS), 1548-1551 (DTEG), and 1625-1628 (TAKD).

It belongs to the TRAFAC class dynamin-like GTPase superfamily. Very large inducible GTPase (VLIG) family. As to expression, widely expressed. Expressed at low basal level in lung, heart, thymus and spleen; at still lower level in liver, ovary, kidney and brain. Expressed at very weak level in testis. Undetectable in embryo.

It localises to the cytoplasm. Its subcellular location is the cytosol. It is found in the nucleus. The protein is Interferon-induced very large GTPase 1 (Gvin1) of Mus musculus (Mouse).